Here is a 450-residue protein sequence, read N- to C-terminus: MSGKVCFDYSKALDFIQEHELDNLQDQVHAAHRALHDGTGAGNDFLGWIDLPVNYDREEFSRIQKAAEKIRNDSDVLLVIGIGGSYLGAKATLEALNHSFYNIVDKSERKGPQIFFVGHHISSTYVQELFDVLEGKDVSINVISKSGTTTEPAIAFRIFRDYLEKKYGKEESRKRIYATTDRERGALKTLANEEGYESFIIPDDVGGRFSVLTAVGLLPIAASGLDIEAMMKGAADARDAFRNSDLKENPAYQYAVVRNALYNKGKTIELMVNYEPALQYFSEWWKQLYGESEGKDGKGIFPASVNFSTDLHSMGQYVQDGRRDLFETIIQVEKPKKNMTIEKADQDLDGLNYLAGETMDFVNKKAFEGTLLAHVDGGVPNLVVSVPELDEYYMGYLMYFFEKACGLSGYLLGVNPFDQPGVEAYKKNMFALLGKPGFEEQKAALEKRLK.

Thr-39 carries the phosphothreonine modification. Residue Glu-291 is the Proton donor of the active site. Residues His-312 and Lys-426 contribute to the active site.

Belongs to the GPI family.

It localises to the cytoplasm. The enzyme catalyses alpha-D-glucose 6-phosphate = beta-D-fructose 6-phosphate. Its pathway is carbohydrate biosynthesis; gluconeogenesis. It functions in the pathway carbohydrate degradation; glycolysis; D-glyceraldehyde 3-phosphate and glycerone phosphate from D-glucose: step 2/4. Functionally, catalyzes the reversible isomerization of glucose-6-phosphate to fructose-6-phosphate. The protein is Glucose-6-phosphate isomerase of Halalkalibacterium halodurans (strain ATCC BAA-125 / DSM 18197 / FERM 7344 / JCM 9153 / C-125) (Bacillus halodurans).